The chain runs to 185 residues: Small ribosomal subunit protein uS7 (185 aa).

The protein belongs to the universal ribosomal protein uS7 family. As to quaternary structure, part of the 30S ribosomal subunit.

Functionally, one of the primary rRNA binding proteins, it binds directly to 16S rRNA where it nucleates assembly of the head domain of the 30S subunit. Is located at the subunit interface close to the decoding center. The protein is Small ribosomal subunit protein uS7 of Methanosarcina barkeri (strain Fusaro / DSM 804).